The chain runs to 409 residues: Elongation factor Tu, chloroplastic (409 aa).

Residues Lys10–Glu214 enclose the tr-type G domain. Residues Gly19–Thr26 are G1. Residue Gly19–Thr26 participates in GTP binding. Thr26 provides a ligand contact to Mg(2+). Residues Gly60–Asn64 form a G2 region. The segment at Asp81–Gly84 is G3. GTP is bound by residues Asp81–His85 and Asn136–Asp139. A G4 region spans residues Asn136–Asp139. Residues Ser174–Leu176 are G5.

It belongs to the TRAFAC class translation factor GTPase superfamily. Classic translation factor GTPase family. EF-Tu/EF-1A subfamily.

The protein localises to the plastid. It localises to the chloroplast. It carries out the reaction GTP + H2O = GDP + phosphate + H(+). Its function is as follows. GTP hydrolase that promotes the GTP-dependent binding of aminoacyl-tRNA to the A-site of ribosomes during protein biosynthesis. This chain is Elongation factor Tu, chloroplastic (tufA), found in Pyropia yezoensis (Susabi-nori).